Reading from the N-terminus, the 241-residue chain is Methylthioribulose-1-phosphate dehydratase (241 aa).

Cysteine 102 provides a ligand contact to substrate. Residues histidine 120, histidine 122, and histidine 199 each coordinate Zn(2+).

It belongs to the aldolase class II family. MtnB subfamily. Zn(2+) is required as a cofactor.

The protein resides in the cytoplasm. It catalyses the reaction 5-(methylsulfanyl)-D-ribulose 1-phosphate = 5-methylsulfanyl-2,3-dioxopentyl phosphate + H2O. It functions in the pathway amino-acid biosynthesis; L-methionine biosynthesis via salvage pathway; L-methionine from S-methyl-5-thio-alpha-D-ribose 1-phosphate: step 2/6. In terms of biological role, catalyzes the dehydration of methylthioribulose-1-phosphate (MTRu-1-P) into 2,3-diketo-5-methylthiopentyl-1-phosphate (DK-MTP-1-P). In Coprinopsis cinerea (strain Okayama-7 / 130 / ATCC MYA-4618 / FGSC 9003) (Inky cap fungus), this protein is Methylthioribulose-1-phosphate dehydratase.